The chain runs to 333 residues: ATP synthase subunit a (333 aa).

An N-terminal signal peptide occupies residues 1 to 32 (MIYLHNKRKGMLKRLSALIVIGLLMNLPAVFA). The next 7 helical transmembrane spans lie at 100-120 (HVVMMWIAAAILLLIMFGVGN), 161-181 (FMPFLLTIFFFILVCNLIGLV), 185-205 (ATATGNINVTATLAIFTFLVT), 229-249 (LMWIIMVPVEFIGLFTKPFAL), 254-274 (FANMTAGHIVIISLLGLIFVF), 279-299 (IAPVSVAFALFIYLLEILVAF), and 300-320 (LQAYIFTLLSALFIGMAVAHE).

The protein belongs to the ATPase A chain family. F-type ATPases have 2 components, CF(1) - the catalytic core - and CF(0) - the membrane proton channel. CF(1) has five subunits: alpha(3), beta(3), gamma(1), delta(1), epsilon(1). CF(0) has four main subunits: a, b, b' and c.

The protein localises to the cell inner membrane. Key component of the proton channel; it plays a direct role in the translocation of protons across the membrane. This is ATP synthase subunit a from Chloroherpeton thalassium (strain ATCC 35110 / GB-78).